The chain runs to 216 residues: NKG2-D type II integral membrane protein (216 aa).

Over 1 to 51 (MGWIRGRRSRHSWEMSEFHNYNLDLKKSDFSTRWQKQRCPVVKSKCRENAS) the chain is Cytoplasmic. Residues 52-72 (PFFFCCFIAVAMGIRFIIMVT) traverse the membrane as a helical; Signal-anchor for type II membrane protein segment. Residues 73-216 (IWSAVFLNSL…NTYICMQRTV (144 aa)) lie on the Extracellular side of the membrane. Disulfide bonds link C96–C105, C99–C110, C127–C211, and C189–C203. A C-type lectin domain is found at 98 to 213 (PCPKNWICYK…STPNTYICMQ (116 aa)). N-linked (GlcNAc...) asparagine glycosylation is found at N131, N163, and N202.

As to quaternary structure, homodimer; disulfide-linked. Heterohexamer composed of two subunits of KLRK1 and four subunits of HCST/DAP10. Interacts (via transmembrane domain) with HCST/DAP10 (via transmembrane domain); the interaction is required for KLRK1 NK cell surface and induces NK cell-mediated cytotoxicity. Does not interact with TYROBP. Interacts with CEACAM1; recruits PTPN6 that dephosphorylates VAV1. Expressed in natural killer (NK) cells, CD8(+) alpha-beta and gamma-delta T-cells. Expressed on essentially all CD56+CD3- NK cells from freshly isolated PBMC. Expressed in interferon-producing killer dendritic cells (IKDCs).

Its subcellular location is the cell membrane. In terms of biological role, functions as an activating and costimulatory receptor involved in immunosurveillance upon binding to various cellular stress-inducible ligands displayed at the surface of autologous tumor cells and virus-infected cells. Provides both stimulatory and costimulatory innate immune responses on activated killer (NK) cells, leading to cytotoxic activity. Acts as a costimulatory receptor for T-cell receptor (TCR) in CD8(+) T-cell-mediated adaptive immune responses by amplifying T-cell activation. Stimulates perforin-mediated elimination of ligand-expressing tumor cells. Signaling involves calcium influx, culminating in the expression of TNF-alpha. Participates in NK cell-mediated bone marrow graft rejection. May play a regulatory role in differentiation and survival of NK cells. Binds to ligands belonging to various subfamilies of MHC class I-related glycoproteins including MICA, MICB, RAET1E, RAET1G, RAET1L/ULBP6, ULBP1, ULBP2, ULBP3 (ULBP2&gt;ULBP1&gt;ULBP3) and ULBP4. The sequence is that of NKG2-D type II integral membrane protein (KLRK1) from Homo sapiens (Human).